The following is a 615-amino-acid chain: Membrane protein insertase YidC (615 aa).

5 helical membrane passes run 9 to 29, 384 to 404, 458 to 478, 516 to 536, and 556 to 576; these read LMFI…VLGP, LVGN…LVLY, LPML…TVTI, LIGA…FTMW, and WFPV…VIYW.

Belongs to the OXA1/ALB3/YidC family. Type 1 subfamily. As to quaternary structure, interacts with the Sec translocase complex via SecD. Specifically interacts with transmembrane segments of nascent integral membrane proteins during membrane integration.

Its subcellular location is the cell inner membrane. In terms of biological role, required for the insertion and/or proper folding and/or complex formation of integral membrane proteins into the membrane. Involved in integration of membrane proteins that insert both dependently and independently of the Sec translocase complex, as well as at least some lipoproteins. Aids folding of multispanning membrane proteins. This Caulobacter vibrioides (strain ATCC 19089 / CIP 103742 / CB 15) (Caulobacter crescentus) protein is Membrane protein insertase YidC.